Consider the following 197-residue polypeptide: ATP-dependent Clp protease proteolytic subunit (197 aa).

Catalysis depends on S102, which acts as the Nucleophile. H127 is an active-site residue.

This sequence belongs to the peptidase S14 family. In terms of assembly, fourteen ClpP subunits assemble into 2 heptameric rings which stack back to back to give a disk-like structure with a central cavity, resembling the structure of eukaryotic proteasomes.

It localises to the cytoplasm. It carries out the reaction Hydrolysis of proteins to small peptides in the presence of ATP and magnesium. alpha-casein is the usual test substrate. In the absence of ATP, only oligopeptides shorter than five residues are hydrolyzed (such as succinyl-Leu-Tyr-|-NHMec, and Leu-Tyr-Leu-|-Tyr-Trp, in which cleavage of the -Tyr-|-Leu- and -Tyr-|-Trp bonds also occurs).. Its function is as follows. Cleaves peptides in various proteins in a process that requires ATP hydrolysis. Has a chymotrypsin-like activity. Plays a major role in the degradation of misfolded proteins. In Borreliella afzelii (strain PKo) (Borrelia afzelii), this protein is ATP-dependent Clp protease proteolytic subunit.